A 313-amino-acid polypeptide reads, in one-letter code: Formimidoylglutamase (313 aa).

6 residues coordinate Mn(2+): His-130, Asp-155, His-157, Asp-159, Asp-241, and Asp-243.

The protein belongs to the arginase family. It depends on Mn(2+) as a cofactor.

It carries out the reaction N-formimidoyl-L-glutamate + H2O = formamide + L-glutamate. It participates in amino-acid degradation; L-histidine degradation into L-glutamate; L-glutamate from N-formimidoyl-L-glutamate (hydrolase route): step 1/1. In terms of biological role, catalyzes the conversion of N-formimidoyl-L-glutamate to L-glutamate and formamide. The protein is Formimidoylglutamase of Salmonella heidelberg (strain SL476).